The following is a 550-amino-acid chain: MTPADLAELLKSTATAVLSEHALDTSALPQTVVVERPRNPEHGDYASNVALQLAKKVGANPRELAGWIAEALTKADGIASAEVAGPGFINLRLETSAQAKIVNAIIDAGSGFGHSELMAAHKVNLEFVSANPTGPIHIGGTRWAAVGDALGRLLSTQGADVVREYYFNDHGAQIDRFANSLIAAAKGEPTPDDGYAGTYINDIAARVLQKAPDALSLPDAQMHETFREIGVDLMFSHIKESLHEFGTDFDVYTHEDSMHSTGRVDQAVARLRETGNIYEKDGATWLRSSSFGDDKDRVVIKSDGKPAYIAGDLAYYLDKRERGFDLCIYMLGADHHGYIARLKAAAAAFGEDPATVEVLIGQMVNLVRDGQPVRMSKRAGTVITLDDLVEAIGVDAARYSLIRSSVDTPIDIDLALWSSASNENPVYYVQYAHARLSALARNAAELGLIPDTDHLELLSHEKEGVLLRTLGDFPRMLKTAASLREPHRVCRYLEDLAGDYHRFYDSCRVLPQGDEEPTQLHTARLALCQATRQVIANGLGILGVTAPERM.

The short motif at 130-140 (ANPTGPIHIGG) is the 'HIGH' region element.

It belongs to the class-I aminoacyl-tRNA synthetase family. As to quaternary structure, monomer.

It is found in the cytoplasm. It carries out the reaction tRNA(Arg) + L-arginine + ATP = L-arginyl-tRNA(Arg) + AMP + diphosphate. The chain is Arginine--tRNA ligase from Mycobacterium marinum (strain ATCC BAA-535 / M).